The primary structure comprises 242 residues: Protein GrpE (242 aa).

2 disordered regions span residues 1–75 and 93–136; these read MSDD…DDEL and VADL…QQIK. Over residues 23–37 the composition is skewed to low complexity; that stretch reads DAESSAAEDASAADD. A compositionally biased stretch (acidic residues) spans 38–49; the sequence is AAPEESTGDEQA. Residues 50-64 are compositionally biased toward polar residues; that stretch reads GETTAESSDAESVTV. A compositionally biased stretch (acidic residues) spans 96 to 108; sequence LETERDEAEETAS. Basic residues predominate over residues 124 to 133; the sequence is YKKRAKKRQQ.

It belongs to the GrpE family. Homodimer.

It is found in the cytoplasm. Its function is as follows. Participates actively in the response to hyperosmotic and heat shock by preventing the aggregation of stress-denatured proteins, in association with DnaK and GrpE. It is the nucleotide exchange factor for DnaK and may function as a thermosensor. Unfolded proteins bind initially to DnaJ; upon interaction with the DnaJ-bound protein, DnaK hydrolyzes its bound ATP, resulting in the formation of a stable complex. GrpE releases ADP from DnaK; ATP binding to DnaK triggers the release of the substrate protein, thus completing the reaction cycle. Several rounds of ATP-dependent interactions between DnaJ, DnaK and GrpE are required for fully efficient folding. In Haloferax mediterranei (strain ATCC 33500 / DSM 1411 / JCM 8866 / NBRC 14739 / NCIMB 2177 / R-4) (Halobacterium mediterranei), this protein is Protein GrpE.